Here is a 137-residue protein sequence, read N- to C-terminus: MSIIKEFREFAMRGNVVDLAVGVIIGAAFGKIVSSLVSDIIMPPLGLLIGGVDFKQFSLILRDAQGEVPAVVMNYGAFIQNIFDFVIVAFAIFMAIKLMNKLRRKQEDEPAAPPKPSAEEKLLAEIRDLLKEQQPKQ.

The next 2 membrane-spanning stretches (helical) occupy residues 10–30 (FAMR…AAFG) and 76–96 (GAFI…FMAI).

The protein belongs to the MscL family. In terms of assembly, homopentamer.

It is found in the cell inner membrane. Channel that opens in response to stretch forces in the membrane lipid bilayer. May participate in the regulation of osmotic pressure changes within the cell. In Pectobacterium carotovorum subsp. carotovorum (strain PC1), this protein is Large-conductance mechanosensitive channel.